Here is a 442-residue protein sequence, read N- to C-terminus: tRNA-2-methylthio-N(6)-dimethylallyladenosine synthase (442 aa).

The 119-residue stretch at 2–120 (KKVFIRTFGC…LPKMIVDKET (119 aa)) folds into the MTTase N-terminal domain. Cys-11, Cys-49, Cys-83, Cys-157, Cys-161, and Cys-164 together coordinate [4Fe-4S] cluster. One can recognise a Radical SAM core domain in the interval 143–375 (RVEGGAAFVS…NEVIEAETAR (233 aa)). The 64-residue stretch at 378–441 (QTMIGTVQRC…TFSLRGKIVE (64 aa)) folds into the TRAM domain.

The protein belongs to the methylthiotransferase family. MiaB subfamily. In terms of assembly, monomer. It depends on [4Fe-4S] cluster as a cofactor.

Its subcellular location is the cytoplasm. The catalysed reaction is N(6)-dimethylallyladenosine(37) in tRNA + (sulfur carrier)-SH + AH2 + 2 S-adenosyl-L-methionine = 2-methylsulfanyl-N(6)-dimethylallyladenosine(37) in tRNA + (sulfur carrier)-H + 5'-deoxyadenosine + L-methionine + A + S-adenosyl-L-homocysteine + 2 H(+). Catalyzes the methylthiolation of N6-(dimethylallyl)adenosine (i(6)A), leading to the formation of 2-methylthio-N6-(dimethylallyl)adenosine (ms(2)i(6)A) at position 37 in tRNAs that read codons beginning with uridine. This chain is tRNA-2-methylthio-N(6)-dimethylallyladenosine synthase, found in Neisseria gonorrhoeae (strain NCCP11945).